The sequence spans 104 residues: Pyrimidine/purine nucleoside phosphorylase (104 aa).

It belongs to the nucleoside phosphorylase PpnP family.

The catalysed reaction is a purine D-ribonucleoside + phosphate = a purine nucleobase + alpha-D-ribose 1-phosphate. It carries out the reaction adenosine + phosphate = alpha-D-ribose 1-phosphate + adenine. The enzyme catalyses cytidine + phosphate = cytosine + alpha-D-ribose 1-phosphate. It catalyses the reaction guanosine + phosphate = alpha-D-ribose 1-phosphate + guanine. The catalysed reaction is inosine + phosphate = alpha-D-ribose 1-phosphate + hypoxanthine. It carries out the reaction thymidine + phosphate = 2-deoxy-alpha-D-ribose 1-phosphate + thymine. The enzyme catalyses uridine + phosphate = alpha-D-ribose 1-phosphate + uracil. It catalyses the reaction xanthosine + phosphate = alpha-D-ribose 1-phosphate + xanthine. Its function is as follows. Catalyzes the phosphorolysis of diverse nucleosides, yielding D-ribose 1-phosphate and the respective free bases. Can use uridine, adenosine, guanosine, cytidine, thymidine, inosine and xanthosine as substrates. Also catalyzes the reverse reactions. This Geotalea uraniireducens (strain Rf4) (Geobacter uraniireducens) protein is Pyrimidine/purine nucleoside phosphorylase.